The chain runs to 155 residues: UPF0178 protein mlr0875 (155 aa).

Belongs to the UPF0178 family.

The protein is UPF0178 protein mlr0875 of Mesorhizobium japonicum (strain LMG 29417 / CECT 9101 / MAFF 303099) (Mesorhizobium loti (strain MAFF 303099)).